Reading from the N-terminus, the 613-residue chain is Oxidoreductase GME11365 (613 aa).

Plastocyanin-like domains follow at residues 72 to 188 (ISEA…HGPS), 198 to 331 (PLLI…WIHG), and 431 to 571 (VDWR…EQPS).

It belongs to the multicopper oxidase family.

Its pathway is secondary metabolite biosynthesis. In terms of biological role, oxidoreductase; part of the gene cluster that mediates the biosynthesis of dibenzodioxocinones such as pestalotiollide B, a novel class of inhibitors against cholesterol ester transfer protein (CEPT). The biosynthesis initiates from condensation of acetate and malonate units catalyzed by the non-reducing PKS pks8/GME11356. Pks8/GME11356 lacks a thioesterase (TE) domain, which is important to the cyclizing of the third ring of atrochrysone carboxylic acid, and the esterase GME11355 might play the role of TE and catalyzes the cyclization reaction of the C ring. The lactamase-like protein GME11357 (or other beta-lactamases in Pestalotiopsis microspora) probably hydrolyzes the thioester bond between the ACP of pks8/GME11356 and the intermediate to release atrochrysone carboxylic acid, which is spontaneously dehydrates to form endocrocin anthrone. Endocrocin anthrone is further converted to emodin via the endocrocin intermediate. Emodin is then oxidized by several enzymes such as the Baeyer-Villiger oxidase GME11358, the oxidoreductase GME11367, the short chain dehydrogenase/reductase GME11373, as well as by other oxidoreductases from the cluster, to modify the A and C rings and open the B ring, and finally yield monodictyphenone. The prenyltransferase GME11375 may catalyze the addition reaction between the C5 side chains and the carbon bone of dibenzodioxocinones. The remaining biochemical reactions to the final product dibenzodioxocinones should be methylation catalyzed by methyltransferase GME11366 and reduction and lactonization reaction catalyzed by a series of oxidordeuctases. The polypeptide is Oxidoreductase GME11365 (Pestalotiopsis microspora).